The sequence spans 288 residues: Dichloromethane dehalogenase (288 aa).

One can recognise a GST N-terminal domain in the interval 12–94; that stretch reads KTLRLLYHPA…YVNEKFDGAG (83 aa). In terms of domain architecture, GST C-terminal spans 100-252; sequence GTQERAQINQ…ASMFKRKTAV (153 aa).

It belongs to the GST superfamily. Homohexamer.

Its subcellular location is the cytoplasm. It catalyses the reaction dichloromethane + H2O = formaldehyde + 2 chloride + 2 H(+). It participates in xenobiotic degradation; dichloromethane degradation. The polypeptide is Dichloromethane dehalogenase (dcmA) (Methylorubrum extorquens (strain DSM 6343 / CIP 106787 / DM4) (Methylobacterium extorquens)).